We begin with the raw amino-acid sequence, 445 residues long: Methylphloroacetophenone oxidase (445 aa).

The chain crosses the membrane as a helical span at residues 25 to 45 (VLSIALIGVACAISIRSILYV). An N-linked (GlcNAc...) asparagine glycan is attached at N51.

The protein belongs to the cytochrome P450 family.

It is found in the membrane. Its pathway is secondary metabolite biosynthesis. Functionally, methylphloroacetophenone oxidase; part of the gene cluster that mediates the biosynthesis of usnic acid, a dibenzofuran lichen product possessing a broad spectrum of biological activities. Two genes, mpas and mpao, comprise the usnic acid biosynthetic gene cluster with a single post-PKS enzyme, the methylphloracetophenone oxidase (mpao). The methylphloroacetophenone synthase (mpas) is a non-reducing polyketide synthase that produces methylphloracetophenone from acetate via a methylated tetraketide intermediate. The methylphloroacetophenone oxidase then carries out the oxidative dimerization of methylphloracetophenone to usnic acid. This is Methylphloroacetophenone oxidase from Cladonia uncialis (Cup lichen).